Reading from the N-terminus, the 727-residue chain is Pentatricopeptide repeat-containing protein At2g33680 (727 aa).

PPR repeat units lie at residues 13–47, 48–78, 79–116, 117–150, 152–182, 183–213, 220–254, 255–285, 286–320, 321–355, 356–386, 387–421, 422–456, 457–487, 488–522, 523–553, and 559–593; these read HTST…GAST, CIQH…IICK, DVVS…DILP, NAYT…MSSF, DIYV…MPER, NTYT…FLRE, SDYV…GLLG, FVAL…SGDR, NSIT…GIKP, SEYT…GFER, HLFA…LQER, DVAL…GIIP, NDPT…GFGL, EVPI…TPNK, DVVS…GMEP, DDVT…MSDQ, and KVDH…HGLC. The type E motif stretch occupies residues 594 to 669; that stretch reads LWRILLSACK…EVGCSWIELK (76 aa). A type E(+) motif region spans residues 670–700; that stretch reads NQYHVFVVGDTMHPMIEETKDLVCLVSRQMI.

The protein belongs to the PPR family. PCMP-E subfamily.

The sequence is that of Pentatricopeptide repeat-containing protein At2g33680 (PCMP-E19) from Arabidopsis thaliana (Mouse-ear cress).